A 522-amino-acid chain; its full sequence is 2-isopropylmalate synthase (522 aa).

A Pyruvate carboxyltransferase domain is found at valine 5–histidine 267. Mn(2+)-binding residues include aspartate 14, histidine 202, histidine 204, and asparagine 238. The interval valine 392–valine 522 is regulatory domain.

It belongs to the alpha-IPM synthase/homocitrate synthase family. LeuA type 1 subfamily. In terms of assembly, homodimer. Mn(2+) serves as cofactor.

The protein resides in the cytoplasm. The enzyme catalyses 3-methyl-2-oxobutanoate + acetyl-CoA + H2O = (2S)-2-isopropylmalate + CoA + H(+). Its pathway is amino-acid biosynthesis; L-leucine biosynthesis; L-leucine from 3-methyl-2-oxobutanoate: step 1/4. Catalyzes the condensation of the acetyl group of acetyl-CoA with 3-methyl-2-oxobutanoate (2-ketoisovalerate) to form 3-carboxy-3-hydroxy-4-methylpentanoate (2-isopropylmalate). In Shewanella amazonensis (strain ATCC BAA-1098 / SB2B), this protein is 2-isopropylmalate synthase.